The chain runs to 251 residues: Probable inactive cytidine deaminase 4 (251 aa).

Substrate is bound at residue 61 to 63; sequence NVE. The active-site Proton donor is E76. A CMP/dCMP-type deaminase domain is found at 136-251; sequence EHCSHLKCRA…VFRCHKTAEN (116 aa).

The protein belongs to the cytidine and deoxycytidylate deaminase family. In terms of assembly, homodimer.

The polypeptide is Probable inactive cytidine deaminase 4 (CDA4) (Arabidopsis thaliana (Mouse-ear cress)).